We begin with the raw amino-acid sequence, 452 residues long: MACRSCVVGFSSLSSCEVTPVGSPRPGTSGWDSCRAPGPGFSSRSLTGCWSAGTISKVTVNPGLLVPLDVKLDPAVQQLKNQEKEEMKALNDKFASLIGKVQALEQRNQLLETRWSFLQGQDSAIFDLGHLYEEYQGRLQEELRKVSQERGQLEANLLQVLEKVEEFRIRYEDEISKRTDMEFTFVQLKKDLDAECLHRTELETKLKSLESFVELMKTIYEQELKDLAAQVKDVSVTVGMDSRCHIDLSGIVEEVKAQYDAVAARSLEEAEAYSRSQLEEQAARSAEYGSSLQSSRSEIADLNVRIQKLRSQILSVKSHCLKLEENIKTAEEQGELAFQDAKTKLAQLEAALQQAKQDMARQLRKYQELMNVKLALDIEIATYRKLVEGEEGRMDSPSATVVSAVQSRCKTAASRSGLSKAPSRKKKGSKGPVIKITEMSEKYFSQESEVSE.

Residues 1–82 (MACRSCVVGF…DPAVQQLKNQ (82 aa)) form a head region. Ser45 carries the phosphoserine modification. Residues 82–118 (QEKEEMKALNDKFASLIGKVQALEQRNQLLETRWSFL) form a coil 1A region. Residues 83–394 (EKEEMKALND…KLVEGEEGRM (312 aa)) enclose the IF rod domain. The linker 1 stretch occupies residues 119 to 135 (QGQDSAIFDLGHLYEEY). The interval 136 to 227 (QGRLQEELRK…TIYEQELKDL (92 aa)) is coil 1B. Residues 228-251 (AAQVKDVSVTVGMDSRCHIDLSGI) form a linker 12 region. The interval 252-390 (VEEVKAQYDA…ATYRKLVEGE (139 aa)) is coil 2. Residues 391–452 (EGRMDSPSAT…YFSQESEVSE (62 aa)) form a tail region. Position 396 is a phosphoserine (Ser396). The interval 412–434 (AASRSGLSKAPSRKKKGSKGPVI) is disordered.

Belongs to the intermediate filament family. As to quaternary structure, heterotetramer of two type I and two type II keratins. As to expression, weakly expressed in tongue, but not skin or in any other tissues or organs examined.

The chain is Keratin, type II cytoskeletal 80 (KRT80) from Homo sapiens (Human).